The chain runs to 497 residues: Glycerol kinase (497 aa).

An ADP-binding site is contributed by Thr-12. ATP-binding residues include Thr-12, Thr-13, and Ser-14. Thr-12 contacts sn-glycerol 3-phosphate. Position 16 (Arg-16) interacts with ADP. 4 residues coordinate sn-glycerol 3-phosphate: Arg-82, Glu-83, Tyr-134, and Asp-243. Residues Arg-82, Glu-83, Tyr-134, Asp-243, and Gln-244 each contribute to the glycerol site. Residues Thr-265 and Gly-308 each coordinate ADP. 4 residues coordinate ATP: Thr-265, Gly-308, Gln-312, and Gly-409. ADP is bound by residues Gly-409 and Asn-413.

It belongs to the FGGY kinase family.

It catalyses the reaction glycerol + ATP = sn-glycerol 3-phosphate + ADP + H(+). The protein operates within polyol metabolism; glycerol degradation via glycerol kinase pathway; sn-glycerol 3-phosphate from glycerol: step 1/1. With respect to regulation, inhibited by fructose 1,6-bisphosphate (FBP). Its function is as follows. Key enzyme in the regulation of glycerol uptake and metabolism. Catalyzes the phosphorylation of glycerol to yield sn-glycerol 3-phosphate. The chain is Glycerol kinase from Nitratidesulfovibrio vulgaris (strain ATCC 29579 / DSM 644 / CCUG 34227 / NCIMB 8303 / VKM B-1760 / Hildenborough) (Desulfovibrio vulgaris).